Reading from the N-terminus, the 149-residue chain is Cyanate hydratase (149 aa).

Catalysis depends on residues Arg-90, Glu-93, and Ser-116.

Belongs to the cyanase family.

The catalysed reaction is cyanate + hydrogencarbonate + 3 H(+) = NH4(+) + 2 CO2. Catalyzes the reaction of cyanate with bicarbonate to produce ammonia and carbon dioxide. This is Cyanate hydratase from Aquifex aeolicus (strain VF5).